A 178-amino-acid polypeptide reads, in one-letter code: Nicotinamide-nucleotide adenylyltransferase (178 aa).

It belongs to the archaeal NMN adenylyltransferase family.

It is found in the cytoplasm. The catalysed reaction is beta-nicotinamide D-ribonucleotide + ATP + H(+) = diphosphate + NAD(+). Its pathway is cofactor biosynthesis; NAD(+) biosynthesis; NAD(+) from nicotinamide D-ribonucleotide: step 1/1. This Pyrobaculum aerophilum (strain ATCC 51768 / DSM 7523 / JCM 9630 / CIP 104966 / NBRC 100827 / IM2) protein is Nicotinamide-nucleotide adenylyltransferase.